A 1026-amino-acid polypeptide reads, in one-letter code: Multidrug resistance protein MdtC (1026 aa).

The next 11 membrane-spanning stretches (helical) occupy residues 15 to 35 (ILIAAAITLCGILGFRLLPVA), 333 to 353 (EVEETLAISVALVILVVFLFL), 360 to 380 (LIPAVAVPVSLIGTFAAMYLC), 387 to 407 (LSLMALTIATGFVVDDAIVVL), 431 to 451 (VGFTVISMSLSLVAVFLPLLL), 463 to 483 (FAVTLSVAIGISLVVSLTLTP), 528 to 548 (LVGVVFLGTVALNIWLYIAIP), 853 to 873 (LILIVAAIATVYIVLGILYES), 897 to 917 (LFNAPFSLIALIGIMLLIGIV), 953 to 973 (PIMMTTLAALFGALPLVLSDG), and 984 to 1004 (ITIVGGLVMSQLLTLYTTPVV).

The protein belongs to the resistance-nodulation-cell division (RND) (TC 2.A.6) family. MdtC subfamily. Part of a tripartite efflux system composed of MdtA, MdtB and MdtC. MdtC forms a heteromultimer with MdtB.

Its subcellular location is the cell inner membrane. The protein is Multidrug resistance protein MdtC of Salmonella heidelberg (strain SL476).